The sequence spans 421 residues: Histidine--tRNA ligase (421 aa).

Belongs to the class-II aminoacyl-tRNA synthetase family.

It is found in the cytoplasm. It carries out the reaction tRNA(His) + L-histidine + ATP = L-histidyl-tRNA(His) + AMP + diphosphate + H(+). This chain is Histidine--tRNA ligase, found in Pyrobaculum islandicum (strain DSM 4184 / JCM 9189 / GEO3).